The primary structure comprises 376 residues: Succinyl-diaminopimelate desuccinylase 1 (376 aa).

Histidine 67 contributes to the Zn(2+) binding site. Aspartate 69 is an active-site residue. Residue aspartate 100 participates in Zn(2+) binding. The active-site Proton acceptor is the glutamate 134. Positions 135, 163, and 349 each coordinate Zn(2+).

The protein belongs to the peptidase M20A family. DapE subfamily. In terms of assembly, homodimer. Zn(2+) serves as cofactor. Co(2+) is required as a cofactor.

It carries out the reaction N-succinyl-(2S,6S)-2,6-diaminopimelate + H2O = (2S,6S)-2,6-diaminopimelate + succinate. The protein operates within amino-acid biosynthesis; L-lysine biosynthesis via DAP pathway; LL-2,6-diaminopimelate from (S)-tetrahydrodipicolinate (succinylase route): step 3/3. Catalyzes the hydrolysis of N-succinyl-L,L-diaminopimelic acid (SDAP), forming succinate and LL-2,6-diaminopimelate (DAP), an intermediate involved in the bacterial biosynthesis of lysine and meso-diaminopimelic acid, an essential component of bacterial cell walls. This is Succinyl-diaminopimelate desuccinylase 1 from Shewanella loihica (strain ATCC BAA-1088 / PV-4).